Here is a 183-residue protein sequence, read N- to C-terminus: Ribosome-recycling factor (183 aa).

It belongs to the RRF family.

It localises to the cytoplasm. Responsible for the release of ribosomes from messenger RNA at the termination of protein biosynthesis. May increase the efficiency of translation by recycling ribosomes from one round of translation to another. In Mycoplasma genitalium (strain ATCC 33530 / DSM 19775 / NCTC 10195 / G37) (Mycoplasmoides genitalium), this protein is Ribosome-recycling factor.